The primary structure comprises 298 residues: Small ribosomal subunit protein uS2 (298 aa).

Positions 240-298 (AGENWDTQAPGAGVPGSAFAAASAAAATSWEADGGDWAASSAPPAGESWAETQPTEAKW) are disordered. Over residues 248-271 (APGAGVPGSAFAAASAAAATSWEA) the composition is skewed to low complexity. Residues 289 to 298 (AETQPTEAKW) are compositionally biased toward polar residues.

The protein belongs to the universal ribosomal protein uS2 family. Component of the small ribosomal subunit. Mature ribosomes consist of a small (40S) and a large (60S) subunit. The 40S subunit contains about 33 different proteins and 1 molecule of RNA (18S). The 60S subunit contains about 49 different proteins and 3 molecules of RNA (25S, 5.8S and 5S). Interacts with rps21.

Its subcellular location is the cytoplasm. Its function is as follows. Required for the assembly and/or stability of the 40S ribosomal subunit. Required for the processing of the 20S rRNA-precursor to mature 18S rRNA in a late step of the maturation of 40S ribosomal subunits. This Aspergillus clavatus (strain ATCC 1007 / CBS 513.65 / DSM 816 / NCTC 3887 / NRRL 1 / QM 1276 / 107) protein is Small ribosomal subunit protein uS2 (rps0).